Consider the following 216-residue polypeptide: ATP phosphoribosyltransferase (216 aa).

It belongs to the ATP phosphoribosyltransferase family. Short subfamily. Heteromultimer composed of HisG and HisZ subunits.

The protein resides in the cytoplasm. It carries out the reaction 1-(5-phospho-beta-D-ribosyl)-ATP + diphosphate = 5-phospho-alpha-D-ribose 1-diphosphate + ATP. It functions in the pathway amino-acid biosynthesis; L-histidine biosynthesis; L-histidine from 5-phospho-alpha-D-ribose 1-diphosphate: step 1/9. Functionally, catalyzes the condensation of ATP and 5-phosphoribose 1-diphosphate to form N'-(5'-phosphoribosyl)-ATP (PR-ATP). Has a crucial role in the pathway because the rate of histidine biosynthesis seems to be controlled primarily by regulation of HisG enzymatic activity. This is ATP phosphoribosyltransferase from Synechococcus sp. (strain CC9902).